A 352-amino-acid polypeptide reads, in one-letter code: C-C chemokine receptor type 5 (352 aa).

Over 1–30 (MDYQVSSPTYDIDYYTSEPCQKINVKQIAA) the chain is Extracellular. Position 3 is a sulfotyrosine (Tyr3). 2 O-linked (GalNAc...) serine glycosylation sites follow: Ser6 and Ser7. Sulfotyrosine occurs at positions 10, 14, and 15. 2 disulfides stabilise this stretch: Cys20–Cys269 and Cys101–Cys178. Residues 31-58 (RLLPPLYSLVFIFGFVGNMLVILILINC) traverse the membrane as a helical segment. Residues 59–68 (KRLKSMTDIY) lie on the Cytoplasmic side of the membrane. A helical membrane pass occupies residues 69–89 (LLNLAISDLFFLLTVPFWAHY). Residues 90-102 (AAAQWDFGNTMCQ) are Extracellular-facing. A helical membrane pass occupies residues 103-124 (LLTGLYFIGFFSGIFFIILLTI). The Cytoplasmic portion of the chain corresponds to 125–141 (DRYLAIVHAVFALKART). A helical membrane pass occupies residues 142 to 166 (VTFGVVTSVITWVVAVFASLPGIIF). Topologically, residues 167–198 (TRSQKEGLHYTCSSHFPYSQYQFWKNFQTLKI) are extracellular. A helical transmembrane segment spans residues 199-218 (VILGLVLPLLVMVICYSGIL). Residues 219-235 (KTLLRCRNEKKRHRAVR) are Cytoplasmic-facing. Residues 236–260 (LIFTIMIVYFLFWAPYNIVLLLNTF) form a helical membrane-spanning segment. Topologically, residues 261–277 (QEFFGLNNCSSSNRLDQ) are extracellular. Residues 278–301 (AMQVTETLGMTHCCINPIIYAFVG) form a helical membrane-spanning segment. Residues 302-352 (EKFRNYLLVFFQKHIAKHFCKCCSIFQQEAPERASSVYTRSTGEQEISVGL) are Cytoplasmic-facing. S-palmitoyl cysteine attachment occurs at residues Cys321, Cys323, and Cys324. 4 positions are modified to phosphoserine; by BARK1: Ser336, Ser337, Ser342, and Ser349.

This sequence belongs to the G-protein coupled receptor 1 family. As to quaternary structure, interacts with PRAF2. Efficient ligand binding to CCL3/MIP-1alpha and CCL4/MIP-1beta requires sulfation, O-glycosylation and sialic acid modifications. Glycosylation on Ser-6 is required for efficient binding of CCL4. Interacts with GRK2. Interacts with ARRB1 and ARRB2. Interacts with CNIH4. Interacts with S100A4; this interaction stimulates T-lymphocyte chemotaxis. Sulfated on at least 2 of the N-terminal tyrosines. Sulfation is required for efficient binding of the chemokines, CCL3 and CCL4. Post-translationally, palmitoylation in the C-terminal is important for cell surface expression. In terms of processing, phosphorylation on serine residues in the C-terminal is stimulated by binding CC chemokines especially by APO-RANTES. O-glycosylated, but not N-glycosylated. Ser-6 appears to be the major site even if Ser-7 may be also O-glycosylated. Also sialylated glycans present which contribute to chemokine binding. Thr-16 and Ser-17 may also be glycosylated and, if so, with small moieties such as a T-antigen.

It is found in the cell membrane. Functionally, receptor for a number of inflammatory CC-chemokines including CCL3/MIP-1-alpha, CCL4/MIP-1-beta and RANTES and subsequently transduces a signal by increasing the intracellular calcium ion level. May play a role in the control of granulocytic lineage proliferation or differentiation. Participates in T-lymphocyte migration to the infection site by acting as a chemotactic receptor. The protein is C-C chemokine receptor type 5 (CCR5) of Symphalangus syndactylus (Siamang).